A 266-amino-acid chain; its full sequence is Glucosamine-6-phosphate deaminase (266 aa).

The active-site Proton acceptor; for enolization step is the aspartate 72. Aspartate 141 serves as the catalytic For ring-opening step. Histidine 143 acts as the Proton acceptor; for ring-opening step in catalysis. The For ring-opening step role is filled by glutamate 148.

It belongs to the glucosamine/galactosamine-6-phosphate isomerase family. NagB subfamily. As to quaternary structure, homohexamer.

It catalyses the reaction alpha-D-glucosamine 6-phosphate + H2O = beta-D-fructose 6-phosphate + NH4(+). It functions in the pathway amino-sugar metabolism; N-acetylneuraminate degradation; D-fructose 6-phosphate from N-acetylneuraminate: step 5/5. Its activity is regulated as follows. Allosterically activated by N-acetylglucosamine 6-phosphate (GlcNAc6P). Catalyzes the reversible isomerization-deamination of glucosamine 6-phosphate (GlcN6P) to form fructose 6-phosphate (Fru6P) and ammonium ion. The protein is Glucosamine-6-phosphate deaminase of Enterobacter sp. (strain 638).